A 239-amino-acid polypeptide reads, in one-letter code: uncharacterized protein (239 aa).

The next 4 membrane-spanning stretches (helical) occupy residues 9–29, 65–85, 94–114, and 167–187; these read LAIY…SQII, IIYL…YLFI, IILI…TFVV, and IYFA…MHWI.

It is found in the cell membrane. This is an uncharacterized protein from Methanocaldococcus jannaschii (strain ATCC 43067 / DSM 2661 / JAL-1 / JCM 10045 / NBRC 100440) (Methanococcus jannaschii).